The chain runs to 455 residues: UDP-glycosyltransferase 79B2 (455 aa).

Residues Ser-266, 325 to 327 (VQQ), 342 to 350 (HCGFGSMWE), and 364 to 367 (LGDQ) contribute to the UDP-alpha-D-glucose site.

Belongs to the UDP-glycosyltransferase family.

The protein is UDP-glycosyltransferase 79B2 (UGT79B2) of Arabidopsis thaliana (Mouse-ear cress).